The sequence spans 93 residues: DNA-directed RNA polymerase subunit Rpo11 (93 aa).

It belongs to the archaeal Rpo11/eukaryotic RPB11/RPC19 RNA polymerase subunit family. As to quaternary structure, part of the RNA polymerase complex.

Its subcellular location is the cytoplasm. It carries out the reaction RNA(n) + a ribonucleoside 5'-triphosphate = RNA(n+1) + diphosphate. Functionally, DNA-dependent RNA polymerase (RNAP) catalyzes the transcription of DNA into RNA using the four ribonucleoside triphosphates as substrates. The sequence is that of DNA-directed RNA polymerase subunit Rpo11 from Methanocella arvoryzae (strain DSM 22066 / NBRC 105507 / MRE50).